Here is a 439-residue protein sequence, read N- to C-terminus: GTPase Obg (439 aa).

The Obg domain occupies 5–164 (TDFFDQATIV…LTLELELKML (160 aa)). An OBG-type G domain is found at 165 to 335 (ADVGLVGFPN…LLQRVAELLR (171 aa)). GTP-binding positions include 171 to 178 (GFPNAGKS), 196 to 200 (FTTLT), 217 to 220 (DIPG), 287 to 290 (NKAD), and 316 to 318 (SAA). Ser178 and Thr198 together coordinate Mg(2+). Residues 337 to 359 (DPPPQRDPVDPDEPPLEWPLPPV) form a disordered region. Positions 356–433 (LPPVDENAFT…IGRAELVWDD (78 aa)) constitute an OCT domain.

Belongs to the TRAFAC class OBG-HflX-like GTPase superfamily. OBG GTPase family. As to quaternary structure, monomer. It depends on Mg(2+) as a cofactor.

Its subcellular location is the cytoplasm. In terms of biological role, an essential GTPase which binds GTP, GDP and possibly (p)ppGpp with moderate affinity, with high nucleotide exchange rates and a fairly low GTP hydrolysis rate. Plays a role in control of the cell cycle, stress response, ribosome biogenesis and in those bacteria that undergo differentiation, in morphogenesis control. This is GTPase Obg from Chloroflexus aggregans (strain MD-66 / DSM 9485).